A 963-amino-acid polypeptide reads, in one-letter code: Transcription factor cbf12 (963 aa).

Disordered stretches follow at residues 130–207 (NPSN…SQGL) and 248–289 (VNMN…PPQK). Composition is skewed to polar residues over residues 143–207 (FENN…SQGL) and 249–289 (NMNS…PPQK).

It belongs to the Su(H) family.

The protein resides in the nucleus. Its function is as follows. Transcription factor which function may be to trigger the increase of adhesion at stationary phase, possibly by counteracting or replacing cbf11 at the respective promoters. May also play a cbf11-antagonistic role in the regulation of a number of other important processes such as extracellular material production, colony morphogenesis, ploidy maintenance, or meiosis. The chain is Transcription factor cbf12 (cbf12) from Schizosaccharomyces pombe (strain 972 / ATCC 24843) (Fission yeast).